Here is a 485-residue protein sequence, read N- to C-terminus: Protein disulfide isomerase-like 5-4 (485 aa).

The region spanning 114 to 263 (VPTGSEFHPG…LVAAMETYVA (150 aa)) is the Thioredoxin domain. Residue cysteine 170 is the Nucleophile of the active site. A helical transmembrane segment spans residues 444-464 (FSHFITNVCAIIGGVFTVAGI).

Belongs to the protein disulfide isomerase family.

Its subcellular location is the membrane. Functionally, acts as a protein-folding catalyst that interacts with nascent polypeptides to catalyze the formation, isomerization, and reduction or oxidation of disulfide bonds. May play a role in storage protein biogenesis. This is Protein disulfide isomerase-like 5-4 (PDIL5-4) from Oryza sativa subsp. japonica (Rice).